The sequence spans 225 residues: MAWRSSGSTNSELIDNLRNNRVFASQRAYDAMKSVDRGDFAPRAPYEDAPQRIGYNATVSAPHMHAAALDYLQNHLVAGAKALDVGSGSGYLTVCMAMMVGRNGTVVGIEHMPQLVELSEKNIRKHHSEQLERGNVIIIEGDGRQGFAEKAPYNAIHVGAASKGVPKALTDQLAEGGRMMIPVEQVDGNQVFMQIDKINGKIEQKIVEHVIYVPLTSREEQWNRN.

S-adenosyl-L-homocysteine contacts are provided by residues 57–60 (ATVS), histidine 65, serine 89, 110–111 (EH), 142–143 (DG), threonine 216, and glutamine 221. The active site involves serine 60.

Belongs to the methyltransferase superfamily. L-isoaspartyl/D-aspartyl protein methyltransferase family. In terms of assembly, monomer.

The protein resides in the cytoplasm. Its subcellular location is the cytosol. The enzyme catalyses [protein]-L-isoaspartate + S-adenosyl-L-methionine = [protein]-L-isoaspartate alpha-methyl ester + S-adenosyl-L-homocysteine. Functionally, initiates the repair of damaged proteins by catalyzing methyl esterification of L-isoaspartyl and D-aspartyl residues produced by spontaneous isomerization and racemization of L-aspartyl and L-asparaginyl residues in aging peptides and proteins. The polypeptide is Protein-L-isoaspartate O-methyltransferase (pcm-1) (Caenorhabditis elegans).